A 118-amino-acid polypeptide reads, in one-letter code: Large ribosomal subunit protein bL20 (118 aa).

It belongs to the bacterial ribosomal protein bL20 family.

In terms of biological role, binds directly to 23S ribosomal RNA and is necessary for the in vitro assembly process of the 50S ribosomal subunit. It is not involved in the protein synthesizing functions of that subunit. This is Large ribosomal subunit protein bL20 from Pelagibacter ubique (strain HTCC1062).